The chain runs to 116 residues: NADPH-dependent 7-cyano-7-deazaguanine reductase (116 aa).

C31 functions as the Thioimide intermediate in the catalytic mechanism. D38 serves as the catalytic Proton donor. Substrate-binding positions include 53–55 (VEL) and 72–73 (YE).

Belongs to the GTP cyclohydrolase I family. QueF type 1 subfamily.

Its subcellular location is the cytoplasm. It catalyses the reaction 7-aminomethyl-7-carbaguanine + 2 NADP(+) = 7-cyano-7-deazaguanine + 2 NADPH + 3 H(+). The protein operates within tRNA modification; tRNA-queuosine biosynthesis. Functionally, catalyzes the NADPH-dependent reduction of 7-cyano-7-deazaguanine (preQ0) to 7-aminomethyl-7-deazaguanine (preQ1). The polypeptide is NADPH-dependent 7-cyano-7-deazaguanine reductase (Chlorobium phaeovibrioides (strain DSM 265 / 1930) (Prosthecochloris vibrioformis (strain DSM 265))).